The chain runs to 146 residues: Ribonuclease H (146 aa).

In terms of domain architecture, RNase H type-1 spans 1 to 138 (MYAWTDGACR…ADALANRGID (138 aa)). Positions 6, 44, 66, and 130 each coordinate Mg(2+).

This sequence belongs to the RNase H family. As to quaternary structure, monomer. Requires Mg(2+) as cofactor.

The protein resides in the cytoplasm. It catalyses the reaction Endonucleolytic cleavage to 5'-phosphomonoester.. Functionally, endonuclease that specifically degrades the RNA of RNA-DNA hybrids. In Alkalilimnicola ehrlichii (strain ATCC BAA-1101 / DSM 17681 / MLHE-1), this protein is Ribonuclease H.